We begin with the raw amino-acid sequence, 323 residues long: tRNA U34 carboxymethyltransferase (323 aa).

Residues lysine 90, tryptophan 104, lysine 109, glycine 129, 182–183 (IE), methionine 197, tyrosine 201, and arginine 316 contribute to the carboxy-S-adenosyl-L-methionine site.

The protein belongs to the class I-like SAM-binding methyltransferase superfamily. CmoB family. Homotetramer.

The enzyme catalyses carboxy-S-adenosyl-L-methionine + 5-hydroxyuridine(34) in tRNA = 5-carboxymethoxyuridine(34) in tRNA + S-adenosyl-L-homocysteine + H(+). Its function is as follows. Catalyzes carboxymethyl transfer from carboxy-S-adenosyl-L-methionine (Cx-SAM) to 5-hydroxyuridine (ho5U) to form 5-carboxymethoxyuridine (cmo5U) at position 34 in tRNAs. In Idiomarina loihiensis (strain ATCC BAA-735 / DSM 15497 / L2-TR), this protein is tRNA U34 carboxymethyltransferase.